Reading from the N-terminus, the 629-residue chain is DNA mismatch repair protein MutL (629 aa).

It belongs to the DNA mismatch repair MutL/HexB family.

This protein is involved in the repair of mismatches in DNA. It is required for dam-dependent methyl-directed DNA mismatch repair. May act as a 'molecular matchmaker', a protein that promotes the formation of a stable complex between two or more DNA-binding proteins in an ATP-dependent manner without itself being part of a final effector complex. This is DNA mismatch repair protein MutL from Haemophilus influenzae (strain PittGG).